Reading from the N-terminus, the 1241-residue chain is MIMFLPLGRISLGILILFLTGGNLVSVSEEIQDRMHAVAVLSPKESTDLSLPTRKRQLLDATETGRRWPLRRRRSILFPNGVRICPSDTVAEAVANHVKYFKARVCQEAIWEAFRTFWDRLPGREEYQYWMNLCEDGVTSVFEMGTQFSQSVEHRHLIMEKLTYTKEAESSSCKDQACGPELSSPVPIGETSTLAGAVSSASYPGAASERSAASPQESISNEIENVTEQPTPPAAEQIAEFSIQLLGKQYSEELRDPSSALYRLLVEEFISEVEKAFTGLPGYKGIHVLDFRSPKENGSGIDVHYAVTFNGEAISNTTWDLISLHSNKVENHGLVELDDKPTAVYTISNFRDYIAETLHQNFLMGNSSLNPDPKSLQLINVRGVLLPQTEEIVWNTQSSSLQVTTSSILDNTLQAEWLSADESITTTTTTTISPFGFSSGPPSATGRELHSESTLGDIVSTPKLASPSKVVLSSSPEVLGGSSLTLHSVTPAVLQIDLPVAPEGRTSGSSILEDDNTEESEDVSIDVLPSSSLIQPVPKETVPPMEDSDMILLTSSPHLTSSVIEDLAKDITTPSGLDSLASRVSDKLDVSPWFPDTSVEKEFIFESGLGSGSGKNVDVIDWPWSETSLEKTTEPLSKSWSEEQDTLLPTESIEKLHMYFTEQMIEPSAHRYGDGPIYFTEEESHVRSTIPIFAESATQPTSLISSKHTSDVPDIDSYSVTKAPFLLATIANTASTKETDEVNTLLKKGMVQTEPSSPKGLDSKISVARPDMQPVWTILPESDTVWARTSSLGKLSRDTLVSTPESADRLWLKASMTQPAELPPSTHSIQLEDEVIMAVQNISLELDQVGTDYYQPELTQEQNGKVDSYVEMPTHVHYTEMPLVAQPTKGGVLSRTQTAGALVVFFSLRVTNMLFSEDLFNKNSLEYKALEQRFLELLVPYLQSNLSGFQNLEILNFRNGSIVVNSRVKFAESVPPNVNNAIYMILEDFCTTAYQTMNLDIDKYSLDVESGDDANPCKFQACNEFSECLVNPWSGEAKCKCHPGYLSVDELPCQSVCDLQPDFCLNDGKCDVMPGHGAICRCRVGSNWWYRGQHCEEFVSEPFVIGITIASVVSLLLVASAVVFFLAKMLQAQNVRRERQRPTNRQPDSLSSVENAMKYNPAYESRLAGCEQYEKPYSQHPFYSSASEEVIGGLSREEIRQMYESSDLSKEEIQERMRILELYANDPEFAAFVREHEMEEL.

A signal peptide spans 1 to 28 (MIMFLPLGRISLGILILFLTGGNLVSVS). The Extracellular portion of the chain corresponds to 29–1104 (EEIQDRMHAV…CEEFVSEPFV (1076 aa)). An O-linked (GalNAc...) threonine glycan is attached at Thr-193. The tract at residues 206-234 (AASERSAASPQESISNEIENVTEQPTPPA) is disordered. Positions 211–229 (SAASPQESISNEIENVTEQ) are enriched in polar residues. An N-linked (GlcNAc...) asparagine glycan is attached at Asn-225. Thr-231 is a glycosylation site (O-linked (GalNAc...) threonine). The region spanning 235–349 (AEQIAEFSIQ…KPTAVYTISN (115 aa)) is the SEA 1 domain. A hyaluronan-binding motif involved in chondroitin sulfate A-binding region spans residues 255–263 (RDPSSALYR). N-linked (GlcNAc...) asparagine glycans are attached at residues Asn-297, Asn-316, and Asn-366. Thr-429, Thr-430, and Thr-431 each carry an O-linked (GalNAc...) threonine glycan. Low complexity predominate over residues 431–443 (TISPFGFSSGPPS). Disordered stretches follow at residues 431 to 456 (TISP…STLG) and 500 to 520 (VAPE…TEES). An O-linked (GalNAc...) threonine glycan is attached at Thr-817. N-linked (GlcNAc...) asparagine glycans are attached at residues Asn-841, Asn-945, and Asn-959. Positions 900–1013 (GALVVFFSLR…YSLDVESGDD (114 aa)) constitute an SEA 2 domain. 2 consecutive EGF-like domains span residues 1013-1054 (DANP…LPCQ) and 1055-1096 (SVCD…QHCE). 6 disulfides stabilise this stretch: Cys-1017-Cys-1028, Cys-1022-Cys-1039, Cys-1041-Cys-1053, Cys-1057-Cys-1070, Cys-1064-Cys-1080, and Cys-1082-Cys-1095. A hyaluronan-binding motif involved in chondroitin sulfate C-binding region spans residues 1083-1091 (RVGSNWWYR). Residues 1105-1125 (IGITIASVVSLLLVASAVVFF) traverse the membrane as a helical segment. At 1126 to 1241 (LAKMLQAQNV…FVREHEMEEL (116 aa)) the chain is on the cytoplasmic side. A hyaluronan-binding motif involved in chondroitin sulfate A- and C-binding region spans residues 1128 to 1136 (KMLQAQNVR). The interval 1139–1145 (RQRPTNR) is hyaluronan-binding motif involved in chondroitin sulfate C-binding. Residues 1210 to 1218 (KEEIQERMR) form a hyaluronan-binding motif involved in chondroitin sulfate A- and C-binding motif region.

As to expression, expressed in the pineal gland and the outer layer of the retina.

Its subcellular location is the photoreceptor outer segment membrane. The protein resides in the photoreceptor inner segment membrane. The protein localises to the secreted. It is found in the extracellular space. It localises to the extracellular matrix. Its subcellular location is the interphotoreceptor matrix. Its function is as follows. Chondroitin sulfate- and hyaluronan-binding proteoglycan involved in the organization of interphotoreceptor matrix; may participate in the maturation and maintenance of the light-sensitive photoreceptor outer segment. Binds heparin. The polypeptide is Interphotoreceptor matrix proteoglycan 2 (Impg2) (Rattus norvegicus (Rat)).